The primary structure comprises 296 residues: Formamidopyrimidine-DNA glycosylase (296 aa).

Catalysis depends on proline 2, which acts as the Schiff-base intermediate with DNA. Residue glutamate 3 is the Proton donor of the active site. Lysine 58 (proton donor; for beta-elimination activity) is an active-site residue. The DNA site is built by histidine 104, arginine 126, and lysine 169. The segment at 260 to 296 (SVYDREGQACGTPGCGGTVARIVQAGRSTFYCAACQK) adopts an FPG-type zinc-finger fold. Arginine 286 functions as the Proton donor; for delta-elimination activity in the catalytic mechanism.

Belongs to the FPG family. Monomer. The cofactor is Zn(2+).

It catalyses the reaction Hydrolysis of DNA containing ring-opened 7-methylguanine residues, releasing 2,6-diamino-4-hydroxy-5-(N-methyl)formamidopyrimidine.. It carries out the reaction 2'-deoxyribonucleotide-(2'-deoxyribose 5'-phosphate)-2'-deoxyribonucleotide-DNA = a 3'-end 2'-deoxyribonucleotide-(2,3-dehydro-2,3-deoxyribose 5'-phosphate)-DNA + a 5'-end 5'-phospho-2'-deoxyribonucleoside-DNA + H(+). Functionally, involved in base excision repair of DNA damaged by oxidation or by mutagenic agents. Acts as a DNA glycosylase that recognizes and removes damaged bases. Has a preference for oxidized purines, such as 7,8-dihydro-8-oxoguanine (8-oxoG). Has AP (apurinic/apyrimidinic) lyase activity and introduces nicks in the DNA strand. Cleaves the DNA backbone by beta-delta elimination to generate a single-strand break at the site of the removed base with both 3'- and 5'-phosphates. In Rhizobium etli (strain ATCC 51251 / DSM 11541 / JCM 21823 / NBRC 15573 / CFN 42), this protein is Formamidopyrimidine-DNA glycosylase.